A 182-amino-acid chain; its full sequence is NADH-quinone oxidoreductase subunit B 2 (182 aa).

Cys55, Cys56, Cys120, and Cys150 together coordinate [4Fe-4S] cluster.

It belongs to the complex I 20 kDa subunit family. NDH-1 is composed of 14 different subunits. Subunits NuoB, C, D, E, F, and G constitute the peripheral sector of the complex. The cofactor is [4Fe-4S] cluster.

It is found in the cell inner membrane. The catalysed reaction is a quinone + NADH + 5 H(+)(in) = a quinol + NAD(+) + 4 H(+)(out). In terms of biological role, NDH-1 shuttles electrons from NADH, via FMN and iron-sulfur (Fe-S) centers, to quinones in the respiratory chain. The immediate electron acceptor for the enzyme in this species is believed to be ubiquinone. Couples the redox reaction to proton translocation (for every two electrons transferred, four hydrogen ions are translocated across the cytoplasmic membrane), and thus conserves the redox energy in a proton gradient. The sequence is that of NADH-quinone oxidoreductase subunit B 2 from Sorangium cellulosum (strain So ce56) (Polyangium cellulosum (strain So ce56)).